The chain runs to 584 residues: 2-succinyl-5-enolpyruvyl-6-hydroxy-3-cyclohexene-1-carboxylate synthase (584 aa).

This sequence belongs to the TPP enzyme family. MenD subfamily. Homodimer. It depends on Mg(2+) as a cofactor. The cofactor is Mn(2+). Requires thiamine diphosphate as cofactor.

It catalyses the reaction isochorismate + 2-oxoglutarate + H(+) = 5-enolpyruvoyl-6-hydroxy-2-succinyl-cyclohex-3-ene-1-carboxylate + CO2. The protein operates within quinol/quinone metabolism; 1,4-dihydroxy-2-naphthoate biosynthesis; 1,4-dihydroxy-2-naphthoate from chorismate: step 2/7. It functions in the pathway quinol/quinone metabolism; menaquinone biosynthesis. Catalyzes the thiamine diphosphate-dependent decarboxylation of 2-oxoglutarate and the subsequent addition of the resulting succinic semialdehyde-thiamine pyrophosphate anion to isochorismate to yield 2-succinyl-5-enolpyruvyl-6-hydroxy-3-cyclohexene-1-carboxylate (SEPHCHC). The chain is 2-succinyl-5-enolpyruvyl-6-hydroxy-3-cyclohexene-1-carboxylate synthase from Bacillus cereus (strain ATCC 10987 / NRS 248).